A 777-amino-acid polypeptide reads, in one-letter code: DnaJ homolog subfamily C member 16 (777 aa).

Positions 1-23 are cleaved as a signal peptide; sequence MELGRAGPAGLLLLLLLLLAAQA. Over 24-531 the chain is Cytoplasmic; the sequence is APERDPYRVL…DSLFHSNWRE (508 aa). Residues 28–92 enclose the J domain; the sequence is DPYRVLGVGR…EKRANFDRYG (65 aa). Residues 117 to 243 form the Thioredoxin domain; sequence FDESFFHFPF…LRQFVENLLP (127 aa). The chain crosses the membrane as a helical; Anchor for type IV membrane protein span at residues 532–552; it reads MMPLLSLLFSALFILFGTVIV. Over 553-777 the chain is Extracellular; the sequence is QAFSDSSDTR…FYIPSWPALD (225 aa). The segment at 558 to 589 is disordered; the sequence is SSDTRDSPASEKKDTTAKTEKNDTSFNKESNS. Over residues 559 to 580 the composition is skewed to basic and acidic residues; the sequence is SDTRDSPASEKKDTTAKTEKND. The N-linked (GlcNAc...) asparagine glycan is linked to N627.

It localises to the endoplasmic reticulum membrane. Its function is as follows. Plays an important role in regulating the size of autophagosomes during the formation process. The chain is DnaJ homolog subfamily C member 16 (DNAJC16) from Gallus gallus (Chicken).